A 753-amino-acid chain; its full sequence is Polyribonucleotide nucleotidyltransferase (753 aa).

The Mg(2+) site is built by Asp-523 and Asp-529. The 60-residue stretch at 589–648 folds into the KH domain; the sequence is PRIISVRIPVDKIGAVIGPKGAMINQIQDDTGADITIEDDGTVLIGATDGASAEAARSAV. The S1 motif domain occupies 660-732; that stretch reads GERYLGTVVK…DRGKLSLSPV (73 aa). The segment at 733-753 is disordered; that stretch reads GAESDAVAETADAIESSQTEA.

The protein belongs to the polyribonucleotide nucleotidyltransferase family. Mg(2+) serves as cofactor.

The protein localises to the cytoplasm. The catalysed reaction is RNA(n+1) + phosphate = RNA(n) + a ribonucleoside 5'-diphosphate. Involved in mRNA degradation. Catalyzes the phosphorolysis of single-stranded polyribonucleotides processively in the 3'- to 5'-direction. In Micrococcus luteus (strain ATCC 4698 / DSM 20030 / JCM 1464 / CCM 169 / CCUG 5858 / IAM 1056 / NBRC 3333 / NCIMB 9278 / NCTC 2665 / VKM Ac-2230) (Micrococcus lysodeikticus), this protein is Polyribonucleotide nucleotidyltransferase.